The primary structure comprises 444 residues: Phosphoglucosamine mutase (444 aa).

The active-site Phosphoserine intermediate is Ser-99. Mg(2+) is bound by residues Ser-99, Asp-242, Asp-244, and Asp-246. Phosphoserine is present on Ser-99.

It belongs to the phosphohexose mutase family. Requires Mg(2+) as cofactor. In terms of processing, activated by phosphorylation.

The catalysed reaction is alpha-D-glucosamine 1-phosphate = D-glucosamine 6-phosphate. In terms of biological role, catalyzes the conversion of glucosamine-6-phosphate to glucosamine-1-phosphate. The chain is Phosphoglucosamine mutase from Aliarcobacter butzleri (strain RM4018) (Arcobacter butzleri).